Here is a 653-residue protein sequence, read N- to C-terminus: Intermembrane lipid transfer protein vps13l (653 aa).

A B box-type zinc finger spans residues 5-49 (ISELKCQQHDKLVTIYCCACDAYFCKKCDKEKHSQDDNQEDSLHI). Positions 10, 13, 32, and 37 each coordinate Zn(2+). 3 disordered regions span residues 159–232 (NLID…NRKK), 248–420 (HILN…EDDS), and 627–653 (EKSNNNNNNNNLDSDSEGETYVNPNEN). A compositionally biased stretch (low complexity) spans 195–213 (SPSPSRSSESNSTTNNNNN). A compositionally biased stretch (acidic residues) spans 266–277 (DYDDDDDNDDDN). Residues 278–293 (NNNNNNNNNNNNNNNN) show a composition bias toward low complexity. Over residues 314–330 (ETEKEIENVENKIDNKP) the composition is skewed to basic and acidic residues. Positions 366-381 (IFEEEEEEEEDEDEVG) are enriched in acidic residues.

The protein belongs to the VPS13 family.

It is found in the membrane. Mediates the transfer of lipids between membranes at organelle contact sites. The sequence is that of Intermembrane lipid transfer protein vps13l (vps13l) from Dictyostelium discoideum (Social amoeba).